We begin with the raw amino-acid sequence, 582 residues long: DBIRD complex subunit ZNF326 (582 aa).

Residues 1–124 (MDFEDDYTHS…YRNSLDSFGG (124 aa)) are mediates transcriptional activation. A phosphoserine mark is found at serine 48, serine 56, serine 63, serine 69, serine 81, serine 82, serine 91, serine 106, serine 114, serine 118, serine 121, and serine 137. A Glycyl lysine isopeptide (Lys-Gly) (interchain with G-Cter in SUMO2) cross-link involves residue lysine 140. The segment at 154 to 194 (YSSYSSFSSPHMKPAPVGSRGRGTPAYPESTFGSRNYDAFG) is disordered. Arginine 173 bears the Omega-N-methylarginine mark. Serine 212 is modified (phosphoserine). Arginine 235 bears the Omega-N-methylarginine mark. A Bipartite nuclear localization signal motif is present at residues 238-260 (KRKMMQPFNKPSGTFIKKPKLAK). A Glycyl lysine isopeptide (Lys-Gly) (interchain with G-Cter in SUMO2) cross-link involves residue lysine 240. The disordered stretch occupies residues 243-302 (QPFNKPSGTFIKKPKLAKPMEKISLSKSPTKTDPKNEEEEKRRIEARREKQRRRREKNSE). The residue at position 247 (lysine 247) is an N6-acetyllysine; alternate. Residue lysine 247 forms a Glycyl lysine isopeptide (Lys-Gly) (interchain with G-Cter in SUMO2); alternate linkage. Serine 249 is subject to Phosphoserine. Phosphothreonine is present on threonine 251. Residues lysine 254 and lysine 264 each participate in a glycyl lysine isopeptide (Lys-Gly) (interchain with G-Cter in SUMO2) cross-link. Serine 270 is subject to Phosphoserine. Basic and acidic residues predominate over residues 272-290 (TKTDPKNEEEEKRRIEARR). Residues 314 to 336 (CSFCKFRTFEEKDIELHLESSSH) form a C2H2 AKAP95-type 1 zinc finger. Lysine 401 is covalently cross-linked (Glycyl lysine isopeptide (Lys-Gly) (interchain with G-Cter in SUMO2)). The C2H2 AKAP95-type 2 zinc finger occupies 407–430 (CSACSVYIPALHSSVQQHLKSPDH). Residues lysine 459 and lysine 467 each participate in a glycyl lysine isopeptide (Lys-Gly) (interchain with G-Cter in SUMO2) cross-link. The interval 472-582 (FEIQDHSQDQ…DFPVEQPEEN (111 aa)) is disordered. Positions 483–523 (IEGDEEDEEKIDEPIEEEEDEDEEEEAEEVGEVEEVEEVEE) are enriched in acidic residues. Positions 530–545 (EGEGNIQGVGEGGEVG) are enriched in gly residues. The span at 552 to 567 (GVGEVEEVEELEEETA) shows a compositional bias: acidic residues.

The protein belongs to the AKAP95 family. Component of the DBIRD complex. Interacts with CCAR2; the interaction is direct.

It localises to the nucleus matrix. In terms of biological role, core component of the DBIRD complex, a multiprotein complex that acts at the interface between core mRNP particles and RNA polymerase II (RNAPII) and integrates transcript elongation with the regulation of alternative splicing: the DBIRD complex affects local transcript elongation rates and alternative splicing of a large set of exons embedded in (A + T)-rich DNA regions. May play a role in neuronal differentiation and is able to bind DNA and activate expression in vitro. This is DBIRD complex subunit ZNF326 (ZNF326) from Homo sapiens (Human).